A 322-amino-acid chain; its full sequence is uncharacterized protein (322 aa).

Positions 277-322 (LVTYGGKDGPSDNEDGPSDDEDGPSDDEEGLSKDGVSEYYQSDLDD) are disordered. The segment covering 287–305 (SDNEDGPSDDEDGPSDDEE) has biased composition (acidic residues).

This is an uncharacterized protein from Frog virus 3 (isolate Goorha) (FV-3).